The primary structure comprises 152 residues: Ribosome maturation factor RimP (152 aa).

The protein belongs to the RimP family.

The protein resides in the cytoplasm. Functionally, required for maturation of 30S ribosomal subunits. The sequence is that of Ribosome maturation factor RimP from Teredinibacter turnerae (strain ATCC 39867 / T7901).